A 201-amino-acid polypeptide reads, in one-letter code: MLAFTLRFIKNKRYLATLAGALVIIAGLTSQHAWSGNGLPQINGKALAALAKQHPVVVLFRHAERCDRSDNTCLSDSTGITVNGAQDARALGKAFSADIQNYNLYSSNTVRTIQSATWFSAGRSFTVDKKMMDCGSGIYASINTLLKKSQNKNIVIFTHNHCLTYIAKNKRGVKFDPDYLNALVMHAENGKLFLDGEFVPG.

An N-terminal signal peptide occupies residues 1 to 35; sequence MLAFTLRFIKNKRYLATLAGALVIIAGLTSQHAWS.

The protein belongs to the phosphoglycerate mutase family. Ais subfamily.

The protein resides in the periplasm. Its pathway is bacterial outer membrane biogenesis; lipopolysaccharide metabolism. Catalyzes the dephosphorylation of heptose(II) of the outer membrane lipopolysaccharide core. This Salmonella paratyphi A (strain AKU_12601) protein is Lipopolysaccharide core heptose(II)-phosphate phosphatase.